The sequence spans 312 residues: tRNA uridine(34) hydroxylase (312 aa).

The region spanning 145-235 is the Rhodanese domain; the sequence is ENKNSVLVDM…GIIKYVRDAR (91 aa). Cys199 (cysteine persulfide intermediate) is an active-site residue.

Belongs to the TrhO family.

The catalysed reaction is uridine(34) in tRNA + AH2 + O2 = 5-hydroxyuridine(34) in tRNA + A + H2O. Functionally, catalyzes oxygen-dependent 5-hydroxyuridine (ho5U) modification at position 34 in tRNAs. This chain is tRNA uridine(34) hydroxylase, found in Buchnera aphidicola subsp. Baizongia pistaciae (strain Bp).